The sequence spans 201 residues: Ras-related protein Rab-9A (201 aa).

Ala-2 carries the N-acetylalanine modification. Gly-17 contacts GDP. The GTP site is built by Gly-17, Val-18, Gly-19, Lys-20, Ser-21, Ser-22, Thr-34, His-38, and Thr-39. Gly-19, Lys-20, Ser-21, and Ser-22 together coordinate GDP. Ser-21 serves as a coordination point for Mg(2+). Residues 31-42 carry the Switch 1 motif; that stretch reads KFDTQLFHTIGV. Positions 39 and 62 each coordinate Mg(2+). The Switch 2 motif lies at 64-78; the sequence is AGQERFRSLRTPFYR. GTP is bound by residues Gly-65, Asn-124, Lys-125, Asp-127, Ala-155, and Lys-156. GDP contacts are provided by Asn-124, Lys-125, Asp-127, Ala-155, and Lys-156. Ser-179 bears the Phosphoserine mark. Thr-187 bears the Phosphothreonine mark. S-geranylgeranyl cysteine attachment occurs at residues Cys-200 and Cys-201.

It belongs to the small GTPase superfamily. Rab family. Interacts (preferentially in its GTP-bound form) with GCC2 (via its GRIP domain). Interacts (GTP-bound form) with SGSM1; the GDP-bound form has much lower affinity for SGSM1. Interacts with SGSM2. The GTP-bound form but not the GDP-bound form interacts with HPS4 and BLOC-3 complex (heterodimer of HPS1 and HPS4) but does not interact with HPS1 alone. Interacts (GTP-bound form) with NDE1; two RAB9A-GTP molecules lie on the opposite sides of the NDE1 homodimer; the interaction leads to RAB9A-dynein motor tethering. Interacts (GTP-bound form) with NDEL1. Mg(2+) serves as cofactor.

It localises to the cell membrane. The protein resides in the endoplasmic reticulum membrane. Its subcellular location is the golgi apparatus membrane. It is found in the late endosome. The protein localises to the cytoplasmic vesicle. It localises to the phagosome membrane. The protein resides in the phagosome. Its subcellular location is the cytoplasmic vesicle membrane. It is found in the melanosome. The enzyme catalyses GTP + H2O = GDP + phosphate + H(+). Its activity is regulated as follows. Regulated by guanine nucleotide exchange factors (GEFs) which promote the exchange of bound GDP for free GTP. Regulated by GTPase activating proteins (GAPs) which increase the GTP hydrolysis activity. Inhibited by GDP dissociation inhibitors (GDIs). The small GTPases Rab are key regulators of intracellular membrane trafficking, from the formation of transport vesicles to their fusion with membranes. Rabs cycle between an inactive GDP-bound form and an active GTP-bound form that is able to recruit to membranes different sets of downstream effectors directly responsible for vesicle formation, movement, tethering and fusion. RAB9A is involved in the transport of proteins between the endosomes and the trans-Golgi network (TGN). Specifically uses NDE1/NDEL1 as an effector to interact with the dynein motor complex in order to control retrograde trafficking of RAB9-associated late endosomes to the TGN. Involved in the recruitment of SGSM2 to melanosomes and is required for the proper trafficking of melanogenic enzymes TYR, TYRP1 and DCT/TYRP2 to melanosomes in melanocytes. The protein is Ras-related protein Rab-9A of Homo sapiens (Human).